We begin with the raw amino-acid sequence, 119 residues long: MIDTTRSLDDLSPARVTTAFDLPGHTTVRSLGVAQGIIVRSRSIVGSFGAALQTIFGGNITLYTSLCEKAREHAFEKMLADARKVGANAIVAMRYDSTEIGSGVTEVICYGTAVIVEPA.

Belongs to the UPF0145 family.

The protein is UPF0145 protein Bcep18194_B0595 of Burkholderia lata (strain ATCC 17760 / DSM 23089 / LMG 22485 / NCIMB 9086 / R18194 / 383).